A 127-amino-acid polypeptide reads, in one-letter code: Ribonuclease P protein component (127 aa).

The interval Ala99 to Arg127 is disordered. Residues Gln107–Arg127 show a composition bias toward basic and acidic residues.

This sequence belongs to the RnpA family. In terms of assembly, consists of a catalytic RNA component (M1 or rnpB) and a protein subunit.

It carries out the reaction Endonucleolytic cleavage of RNA, removing 5'-extranucleotides from tRNA precursor.. RNaseP catalyzes the removal of the 5'-leader sequence from pre-tRNA to produce the mature 5'-terminus. It can also cleave other RNA substrates such as 4.5S RNA. The protein component plays an auxiliary but essential role in vivo by binding to the 5'-leader sequence and broadening the substrate specificity of the ribozyme. This is Ribonuclease P protein component from Mycobacteroides abscessus (strain ATCC 19977 / DSM 44196 / CCUG 20993 / CIP 104536 / JCM 13569 / NCTC 13031 / TMC 1543 / L948) (Mycobacterium abscessus).